Reading from the N-terminus, the 300-residue chain is 33 kDa chaperonin (300 aa).

2 disulfides stabilise this stretch: C235–C237 and C269–C272.

The protein belongs to the HSP33 family. In terms of processing, under oxidizing conditions two disulfide bonds are formed involving the reactive cysteines. Under reducing conditions zinc is bound to the reactive cysteines and the protein is inactive.

It localises to the cytoplasm. In terms of biological role, redox regulated molecular chaperone. Protects both thermally unfolding and oxidatively damaged proteins from irreversible aggregation. Plays an important role in the bacterial defense system toward oxidative stress. This Pseudomonas savastanoi pv. phaseolicola (strain 1448A / Race 6) (Pseudomonas syringae pv. phaseolicola (strain 1448A / Race 6)) protein is 33 kDa chaperonin.